We begin with the raw amino-acid sequence, 258 residues long: Terpene cyclase macJ (258 aa).

7 consecutive transmembrane segments (helical) span residues 29–49 (VPDGFTAISGILWSISYILMA), 58–78 (YAMPLHCLCLNITWEAVYGFV), 83–103 (LLNQVVFAQWMIVDVVLFYAI), 124–144 (IIVVGCVICLWLHLAIAATFI), 151–171 (VVFMTAWPMQVLINFSSIAQL), 181–201 (SWGIWWTRMLGTIAAACCFFW), and 220–240 (FLLLGSIGSDMVYAAVYVYVQ).

The protein belongs to the paxB family.

The protein localises to the membrane. The protein operates within secondary metabolite biosynthesis; terpenoid biosynthesis. Its function is as follows. Terpene cyclase; part of the gene cluster that mediates the biosynthesis of macrophorins, isoprenoid epoxycyclohexenones containing cyclized drimane moieties. The first step of the pathway is the synthesis of 6-methylsalicylic acid (6-MSA) by the polyketide synthase macA. 6-MSA is then converted to m-cresol by the decarboxylase macB. The cytochrome P450 monooxygenase macC then catalyzes the oxidation of m-cresol to toluquinol. Epoxidation of toluquinol is then performed by the short chain dehydrogenase macD, with the help of macE, and a further prenylation by macG leads to 7-deacetoxyyanuthone A. The next step is the hydroxylation of C-22 of 7-deacetoxyyanuthone A by the cytochrome P450 monooxygenase macH to yield 22-deacetylyanuthone A. O-Mevalon transferase macI then attaches mevalon to the hydroxyl group of 22-deacetylyanuthone A to produce yanuthone E. The terpene cyclase macJ catalyzes the cyclization of 22-deacetylyanuthone A to macrophorin A. MacJ is also able to catalyze cyclization of yanuthone E and 7-deacetoxyyanuthone A to their corresponding macrophorins. The macJ products can be further modified by macH and macJ, as well as by the FAD-dependent monooxygenase macF, to produce additional macrophorins, including 4'-oxomacrophorin A, 4'-oxomacrophorin D and 4'-oxomacrophorin E. This Penicillium terrestre protein is Terpene cyclase macJ.